Here is a 291-residue protein sequence, read N- to C-terminus: Methionine aminopeptidase (291 aa).

Position 118 (histidine 118) interacts with substrate. Aspartate 135, aspartate 146, and histidine 209 together coordinate a divalent metal cation. Histidine 216 contributes to the substrate binding site. A divalent metal cation-binding residues include glutamate 241 and glutamate 273.

This sequence belongs to the peptidase M24A family. Methionine aminopeptidase type 1 subfamily. In terms of assembly, monomer. Requires Co(2+) as cofactor. Zn(2+) is required as a cofactor. Mn(2+) serves as cofactor. The cofactor is Fe(2+).

The enzyme catalyses Release of N-terminal amino acids, preferentially methionine, from peptides and arylamides.. Removes the N-terminal methionine from nascent proteins. The N-terminal methionine is often cleaved when the second residue in the primary sequence is small and uncharged (Met-Ala-, Cys, Gly, Pro, Ser, Thr, or Val). Requires deformylation of the N(alpha)-formylated initiator methionine before it can be hydrolyzed. In Chlamydia muridarum (strain MoPn / Nigg), this protein is Methionine aminopeptidase.